Reading from the N-terminus, the 741-residue chain is Polyribonucleotide nucleotidyltransferase (741 aa).

Residues D489 and D495 each coordinate Mg(2+). In terms of domain architecture, KH spans 556 to 615; sequence PKIDSIQIPVDKIKVVIGKGGETIDKIIAETGVTIDIDEEGLVQIFSSDQDAIDRAKTII. Residues 625 to 693 enclose the S1 motif domain; that stretch reads GEVYTVPVVR…EKGRVDASIK (69 aa). The interval 695-741 is disordered; that stretch reads LLPKPEKNEDGENGEEHRHCCCSHHKPDHHNESVEAPKKSDESETKE. Basic and acidic residues-rich tracts occupy residues 698–713 and 723–741; these read KPEKNEDGENGEEHRH and HHNESVEAPKKSDESETKE.

It belongs to the polyribonucleotide nucleotidyltransferase family. Mg(2+) is required as a cofactor.

The protein localises to the cytoplasm. The catalysed reaction is RNA(n+1) + phosphate = RNA(n) + a ribonucleoside 5'-diphosphate. Its function is as follows. Involved in mRNA degradation. Catalyzes the phosphorolysis of single-stranded polyribonucleotides processively in the 3'- to 5'-direction. The protein is Polyribonucleotide nucleotidyltransferase of Streptococcus thermophilus (strain CNRZ 1066).